A 127-amino-acid polypeptide reads, in one-letter code: Fatty acid-binding protein, liver (127 aa).

Position 1 is an N-acetylmethionine (Met1). Ser11 bears the Phosphoserine mark. An N6-succinyllysine mark is found at Lys31 and Lys36. At Ser39 the chain carries Phosphoserine. Position 46 is an N6-succinyllysine (Lys46). The residue at position 51 (Thr51) is a Phosphothreonine. Residues Lys57 and Lys78 each carry the N6-succinyllysine modification. The residue at position 84 (Lys84) is an N6-acetyllysine; alternate. Lys84 carries the N6-succinyllysine; alternate modification. Lys90 is subject to N6-succinyllysine. At Ser100 the chain carries Phosphoserine. Position 121 is an N6-succinyllysine (Lys121).

It belongs to the calycin superfamily. Fatty-acid binding protein (FABP) family.

It localises to the cytoplasm. In terms of biological role, plays a role in lipoprotein-mediated cholesterol uptake in hepatocytes. Binds cholesterol. Binds free fatty acids and their coenzyme A derivatives, bilirubin, and some other small molecules in the cytoplasm. May be involved in intracellular lipid transport. This is Fatty acid-binding protein, liver (Fabp1) from Mus musculus (Mouse).